The sequence spans 1020 residues: Probable leucine-rich repeat receptor-like serine/threonine-protein kinase At3g14840 (1020 aa).

The N-terminal stretch at 1-26 is a signal peptide; the sequence is MSLNRQLLFTYYFIVSLILFSDFVSS. At 27-614 the chain is on the extracellular side; sequence ATLPKEEVDA…GTGGGSSVGT (588 aa). N-linked (GlcNAc...) asparagine glycosylation is found at N50 and N81. LRR repeat units follow at residues 86–110, 111–134, 136–157, 158–181, 182–204, 206–231, 253–276, 277–301, 302–324, and 326–349; these read ICHV…LSGL, PFLQ…WGAS, LLNI…LGNL, TTLS…LGNL, PNLK…TFAK, TTLT…NWKG, LGTL…PLRN, MTSM…LGQN, RKLK…TYSG, and SDVD…MVDQ. 3 N-linked (GlcNAc...) asparagine glycosylation sites follow: N124, N138, and N156. An N-linked (GlcNAc...) asparagine glycan is attached at N193. N-linked (GlcNAc...) asparagine glycosylation is found at N276 and N289. N359, N386, N389, N417, N461, N469, and N498 each carry an N-linked (GlcNAc...) asparagine glycan. The LRR 11 repeat unit spans residues 479 to 501; the sequence is QARLSAISLTYQALCLGKGNYTV. The chain crosses the membrane as a helical span at residues 615–635; that stretch reads VVGSVIASTVFLVLLIGGILW. Topologically, residues 636 to 1020 are cytoplasmic; it reads WRGCLRPKSQ…LDSAYWNTRT (385 aa). The region spanning 672-949 is the Protein kinase domain; that stretch reads FDPANKIGEG…VSMLEGHSTV (278 aa). Residues 678–686 and K700 each bind ATP; that span reads IGEGGFGPV. Y745 bears the Phosphotyrosine mark. Catalysis depends on D798, which acts as the Proton acceptor. The residue at position 831 (S831) is a Phosphoserine. T832 and T837 each carry phosphothreonine. Residue Y845 is modified to Phosphotyrosine.

It belongs to the protein kinase superfamily. Ser/Thr protein kinase family.

The protein localises to the cell membrane. It carries out the reaction L-seryl-[protein] + ATP = O-phospho-L-seryl-[protein] + ADP + H(+). It catalyses the reaction L-threonyl-[protein] + ATP = O-phospho-L-threonyl-[protein] + ADP + H(+). The polypeptide is Probable leucine-rich repeat receptor-like serine/threonine-protein kinase At3g14840 (LRR-RLK) (Arabidopsis thaliana (Mouse-ear cress)).